Consider the following 83-residue polypeptide: Small ribosomal subunit protein eS21 (83 aa).

Belongs to the eukaryotic ribosomal protein eS21 family. Component of the 40S small ribosomal subunit. Interacts with sta.

It is found in the cytoplasm. The protein localises to the cytosol. Its subcellular location is the rough endoplasmic reticulum. In terms of biological role, may be an associated component of the ribosome rather than a core structural subunit. May act as a translation initiation factor. Has a role in regulation of cell proliferation in the hematopoietic organs and the imaginal disks of larva. This chain is Small ribosomal subunit protein eS21 (RpS21), found in Drosophila grimshawi (Hawaiian fruit fly).